We begin with the raw amino-acid sequence, 329 residues long: MAVTEQDTQVPTLRKIVTSESEPLARRFRALFSLKHLASLQPPTEQTVPAIEAIAAAFSSPSALLKHELAYCLGQSGHDAAIAPLRGVLEDKDEDSMCRHEAAEALGALSDKGSLELLKKMRDDANEVDVVRETCDIAVDRIEWEHGLQKGTEKLKKSDFTSVDPAPPMPESNEAPSIPALEKTLLDTTLPLFQRYRAMFALRDLSSPPDLPTAVPAVHALARGFGDPSALFRHEIAFVFGQLSHPASIPSLTEALSNTKEASMVRHEAAEALGSLGDEEGVEETLKKFLNDPEQVVRDSVIVALDMAEFEKNGEVEYAIVPQAQAIAA.

HEAT-like PBS-type repeat units lie at residues 65-91 (LKHE…VLED), 99-124 (RHEA…MRDD), 232-258 (FRHE…ALSN), and 265-292 (VRHE…FLND). Residues His-67, Glu-68, His-100, Glu-101, His-234, Glu-235, His-267, and Glu-268 each contribute to the Fe cation site.

Belongs to the deoxyhypusine hydroxylase family. Fe(2+) is required as a cofactor.

It localises to the cytoplasm. The protein resides in the nucleus. It catalyses the reaction [eIF5A protein]-deoxyhypusine + AH2 + O2 = [eIF5A protein]-hypusine + A + H2O. It participates in protein modification; eIF5A hypusination. In terms of biological role, catalyzes the hydroxylation of the N(6)-(4-aminobutyl)-L-lysine intermediate to form hypusine, an essential post-translational modification only found in mature eIF-5A factor. The chain is Deoxyhypusine hydroxylase from Phaeosphaeria nodorum (strain SN15 / ATCC MYA-4574 / FGSC 10173) (Glume blotch fungus).